The following is an 803-amino-acid chain: Palmitoyl thioesterase CPT1C (803 aa).

Topologically, residues 1 to 52 are cytoplasmic; it reads MAEAHQAVGFRPSLTSDGAEVELSAPVLQEIYLSGLRSWKRHLSRFWNDFLT. The chain crosses the membrane as a helical span at residues 53-75; sequence GVFPASPLSWLFLFSAIQLAWFL. Topologically, residues 76 to 103 are lumenal; sequence QLDPSLGLMEKIKELLPDWGGQHHGLRG. Residues 104-126 traverse the membrane as a helical segment; sequence VLAAALFASCLWGALIFTLHVAL. The Cytoplasmic portion of the chain corresponds to 127–803; it reads RLLLSYHGWL…SKASMTSTDF (677 aa). Catalysis depends on histidine 470, which acts as the Proton acceptor. 552 to 564 contributes to the CoA binding site; it reads GKSFIRRCHLSSD. (R)-carnitine-binding residues include tyrosine 586, serine 588, and threonine 599. Residues 761-803 are required for interaction with GRIA1; it reads LFQAGQHFKRRFRGSGKENSRHRCGFLSRQTGASKASMTSTDF. Residues 772 to 803 are disordered; the sequence is FRGSGKENSRHRCGFLSRQTGASKASMTSTDF. The span at 788 to 803 shows a compositional bias: polar residues; the sequence is SRQTGASKASMTSTDF.

The protein belongs to the carnitine/choline acetyltransferase family. As to quaternary structure, peripherally associated with AMPAR complex. AMPAR complex consists of an inner core made of 4 pore-forming GluA/GRIA proteins (GRIA1, GRIA2, GRIA3 and GRIA4) and 4 major auxiliary subunits arranged in a twofold symmetry. One of the two pairs of distinct binding sites is occupied either by CNIH2, CNIH3 or CACNG2, CACNG3. The other harbors CACNG2, CACNG3, CACNG4, CACNG8 or GSG1L. This inner core of AMPAR complex is complemented by outer core constituents binding directly to the GluA/GRIA proteins at sites distinct from the interaction sites of the inner core constituents. Outer core constituents include at least PRRT1, PRRT2, CKAMP44/SHISA9, FRRS1L and NRN1. The proteins of the inner and outer core serve as a platform for other, more peripherally associated AMPAR constituents, including CPT1C. Alone or in combination, these auxiliary subunits control the gating and pharmacology of the AMPAR complex and profoundly impact their biogenesis and protein processing. Interacts with SACM1L; the interaction regulates SACM1L phosphatidylinositol-3-phosphatase activity and translocation to endoplasmic reticulum/trans Golgi network in a malonyl-CoA dependent manner. Interacts with ATL1. As to expression, expressed predominantly in brain and testis. Expressed in motor neurons.

It localises to the cell projection. It is found in the dendrite. The protein resides in the axon. The protein localises to the endoplasmic reticulum membrane. It catalyses the reaction S-hexadecanoyl-L-cysteinyl-[protein] + H2O = L-cysteinyl-[protein] + hexadecanoate + H(+). In terms of biological role, palmitoyl thioesterase specifically expressed in the endoplasmic reticulum of neurons. Modulates the trafficking of the glutamate receptor, AMPAR, to plasma membrane through depalmitoylation of GRIA1. Also regulates AMPR trafficking through the regulation of SACM1L phosphatidylinositol-3-phosphatase activity by interaction in a malonyl-CoA dependent manner. Binds malonyl-CoA and couples malonyl-CoA to ceramide levels, necessary for proper spine maturation and contributing to systemic energy homeostasis and appetite control. Binds to palmitoyl-CoA, but does not have carnitine palmitoyltransferase 1 catalytic activity or at very low levels. In Homo sapiens (Human), this protein is Palmitoyl thioesterase CPT1C.